The sequence spans 1403 residues: DNA-directed RNA polymerase subunit beta' (1403 aa).

Residues Cys-70, Cys-72, Cys-85, and Cys-88 each coordinate Zn(2+). Mg(2+) contacts are provided by Asp-461, Asp-463, and Asp-465. The tract at residues 687–708 (QQISQEETTGDRDGKRETRKQP) is disordered. The span at 695-706 (TGDRDGKRETRK) shows a compositional bias: basic and acidic residues. Zn(2+)-binding residues include Cys-805, Cys-879, Cys-886, and Cys-889. Positions 1381-1403 (THGDTGPLGEPSRPVGTQTTGAA) are disordered.

This sequence belongs to the RNA polymerase beta' chain family. The RNAP catalytic core consists of 2 alpha, 1 beta, 1 beta' and 1 omega subunit. When a sigma factor is associated with the core the holoenzyme is formed, which can initiate transcription. Mg(2+) is required as a cofactor. It depends on Zn(2+) as a cofactor.

The enzyme catalyses RNA(n) + a ribonucleoside 5'-triphosphate = RNA(n+1) + diphosphate. DNA-dependent RNA polymerase catalyzes the transcription of DNA into RNA using the four ribonucleoside triphosphates as substrates. In Myxococcus xanthus (strain DK1622), this protein is DNA-directed RNA polymerase subunit beta'.